The following is a 272-amino-acid chain: Bis(5'-nucleosyl)-tetraphosphatase, symmetrical (272 aa).

It belongs to the Ap4A hydrolase family.

The catalysed reaction is P(1),P(4)-bis(5'-adenosyl) tetraphosphate + H2O = 2 ADP + 2 H(+). Its function is as follows. Hydrolyzes diadenosine 5',5'''-P1,P4-tetraphosphate to yield ADP. This Shewanella frigidimarina (strain NCIMB 400) protein is Bis(5'-nucleosyl)-tetraphosphatase, symmetrical.